Reading from the N-terminus, the 499-residue chain is Chitinase B (499 aa).

An N-terminal signal peptide occupies residues 1-41; the sequence is MSTRKAVIGYYFIPTNQINNYTETDTSVVPFPVSNITPAKA. Residues 42-425 enclose the GH18 domain; that stretch reads KQLTHINFSF…AALDRYFNAA (384 aa). Chitin is bound by residues 68-69 and 95-98; these read DA and GGWY. E144 functions as the Proton donor in the catalytic mechanism. Chitin contacts are provided by residues Y145, 212–215, and W403; that span reads MTYD. One can recognise a Chitin-binding type-3 domain in the interval 438–498; it reads LRYTGVGPGN…DSAWLKVGRL (61 aa).

Belongs to the glycosyl hydrolase 18 family. Chitinase class II subfamily.

The catalysed reaction is Random endo-hydrolysis of N-acetyl-beta-D-glucosaminide (1-&gt;4)-beta-linkages in chitin and chitodextrins.. This chain is Chitinase B (chiB), found in Serratia marcescens.